A 552-amino-acid polypeptide reads, in one-letter code: Lysine--tRNA ligase (552 aa).

The 'HIGH' region signature appears at 72–80; sequence PSGLPHLGT. The short motif at 320–324 is the 'KMSKS' region element; it reads KISKS. Lys-323 provides a ligand contact to ATP.

Belongs to the class-I aminoacyl-tRNA synthetase family.

It is found in the cytoplasm. It carries out the reaction tRNA(Lys) + L-lysine + ATP = L-lysyl-tRNA(Lys) + AMP + diphosphate. The chain is Lysine--tRNA ligase from Caulobacter vibrioides (strain ATCC 19089 / CIP 103742 / CB 15) (Caulobacter crescentus).